Here is a 395-residue protein sequence, read N- to C-terminus: Phosphoglycerate kinase (395 aa).

Substrate is bound by residues 21-23 (DIN), arginine 36, 59-62 (HFGR), arginine 114, and arginine 147. Residues lysine 197, glutamate 322, and 352-355 (GGDT) contribute to the ATP site.

This sequence belongs to the phosphoglycerate kinase family. In terms of assembly, monomer.

The protein localises to the cytoplasm. The enzyme catalyses (2R)-3-phosphoglycerate + ATP = (2R)-3-phospho-glyceroyl phosphate + ADP. The protein operates within carbohydrate degradation; glycolysis; pyruvate from D-glyceraldehyde 3-phosphate: step 2/5. The sequence is that of Phosphoglycerate kinase from Roseobacter denitrificans (strain ATCC 33942 / OCh 114) (Erythrobacter sp. (strain OCh 114)).